The sequence spans 441 residues: Ribosomal protein uS12 methylthiotransferase RimO (441 aa).

In terms of domain architecture, MTTase N-terminal spans 5 to 116 (PTIAFTHLGC…IVDVMQRVEK (112 aa)). 6 residues coordinate [4Fe-4S] cluster: Cys-14, Cys-50, Cys-79, Cys-154, Cys-158, and Cys-161. The Radical SAM core domain occupies 140–370 (TTSEGVAYVR…EVQQSISWQQ (231 aa)). One can recognise a TRAM domain in the interval 372–438 (QKLVGQLVDV…IYDLYGCLIS (67 aa)).

It belongs to the methylthiotransferase family. RimO subfamily. [4Fe-4S] cluster is required as a cofactor.

It is found in the cytoplasm. It carries out the reaction L-aspartate(89)-[ribosomal protein uS12]-hydrogen + (sulfur carrier)-SH + AH2 + 2 S-adenosyl-L-methionine = 3-methylsulfanyl-L-aspartate(89)-[ribosomal protein uS12]-hydrogen + (sulfur carrier)-H + 5'-deoxyadenosine + L-methionine + A + S-adenosyl-L-homocysteine + 2 H(+). Its function is as follows. Catalyzes the methylthiolation of an aspartic acid residue of ribosomal protein uS12. This chain is Ribosomal protein uS12 methylthiotransferase RimO, found in Trichodesmium erythraeum (strain IMS101).